The sequence spans 352 residues: MALIVDKHRPRSLDALTYHTELSERLRSLAQSGDFPHLLVYGPSGAGKKTRIVATLKELYGPGVEKIKIDARVFQTSSNRKLEFNIVASVYHLEITPSDVGNYDRVVVQDLLKEVAQTQQVDLSAKQRFKVVVINEADHLTRDAQAALRRTMEKYSPNLRLILLANSTANIIAPIRSRCLLVRVAAPTHKEICDVLASSAKKEGWPIVKGLHQRIAEESGRNLRRALLMYEAVYAQNEKVTDSTPIPPPDWEALIGQIAKEIMEEHTPARILQVRAKLYDLLTHCIPATIILKTLTFKLIPLIDDALKADVIYWSAFYEHRIRTGTKVIFHLEAFVAKFMRIFEMYLMSMDL.

This sequence belongs to the activator 1 small subunits family. In terms of assembly, heteropentamer of subunits rfc1, rfc2, rfc3, rfc4 and rfc5 that forms a complex with PCNA in the presence of ATP.

It localises to the nucleus. In terms of biological role, the elongation of primed DNA templates by DNA polymerase delta and epsilon requires the action of the accessory proteins proliferating cell nuclear antigen (PCNA) and activator 1. The chain is Replication factor C subunit 5 from Neurospora crassa (strain ATCC 24698 / 74-OR23-1A / CBS 708.71 / DSM 1257 / FGSC 987).